We begin with the raw amino-acid sequence, 185 residues long: Ribosome-recycling factor (185 aa).

The disordered stretch occupies residues 132 to 152 (RRDANEQLKKMEKDSELTEDD).

It belongs to the RRF family.

It is found in the cytoplasm. Responsible for the release of ribosomes from messenger RNA at the termination of protein biosynthesis. May increase the efficiency of translation by recycling ribosomes from one round of translation to another. The chain is Ribosome-recycling factor from Alkaliphilus metalliredigens (strain QYMF).